Consider the following 377-residue polypeptide: MEALLLGVGLLLGAYVLVYYNLVKAPPCRGLASLRGRTAVVTGANSGIGKMTALELARRGARVVLACRSRERGEAAAFDLRQESGNNEVIFMALDLASLASVRAFATAFLSSEPRLDILIHNAGISSCGRTREPFNLLLRVNHIGPFLLTHLLLPRLKTSAPSRVVVVSSAAHRRGRLDFTRLDHPVVGWQQELRAYANSKLANVLFARELATQLEGTGVTCYAAHPGPVNSELFLRHVPGWLRPLLRPLAWLVLRAPRGGAQTPLYCALQEGIEPLSGRYFANCHVEEVPPAARDDRAAHRLWEASRKLAGLGPGEDAESDEDSQPEDPGTPSSPSSPHPEEPTVSELYPSPQSSTDRSTVTCRIPVKAELEPQAC.

Residues Met1–Ala25 form the signal peptide. Ser46 and Ile48 together coordinate NAD(+). Ser170 serves as a coordination point for substrate. Residues Tyr197, Lys201, and Ser232 each coordinate NAD(+). Tyr197 (proton acceptor) is an active-site residue. The tract at residues Leu310–Thr363 is disordered. Positions Glu317 to Pro327 are enriched in acidic residues. The span at Glu328 to Ser337 shows a compositional bias: low complexity. Positions Ser352–Thr363 are enriched in polar residues.

It belongs to the short-chain dehydrogenases/reductases (SDR) family.

It localises to the secreted. In terms of biological role, putative oxidoreductase. This Bos taurus (Bovine) protein is Dehydrogenase/reductase SDR family member 13 (DHRS13).